Here is a 313-residue protein sequence, read N- to C-terminus: 4-diphosphocytidyl-2-C-methyl-D-erythritol kinase (313 aa).

The active site involves K11. 99-109 (PVAAGLAGGST) contacts ATP. Residue D141 is part of the active site.

Belongs to the GHMP kinase family. IspE subfamily.

It catalyses the reaction 4-CDP-2-C-methyl-D-erythritol + ATP = 4-CDP-2-C-methyl-D-erythritol 2-phosphate + ADP + H(+). It participates in isoprenoid biosynthesis; isopentenyl diphosphate biosynthesis via DXP pathway; isopentenyl diphosphate from 1-deoxy-D-xylulose 5-phosphate: step 3/6. Catalyzes the phosphorylation of the position 2 hydroxy group of 4-diphosphocytidyl-2C-methyl-D-erythritol. The polypeptide is 4-diphosphocytidyl-2-C-methyl-D-erythritol kinase (Microcystis aeruginosa (strain NIES-843 / IAM M-2473)).